The chain runs to 303 residues: Acetaldehyde dehydrogenase 2 (303 aa).

The Acyl-thioester intermediate role is filled by Cys-130. NAD(+)-binding positions include 161–169 (SVGPGTRKN) and Asn-272.

Belongs to the acetaldehyde dehydrogenase family.

It catalyses the reaction acetaldehyde + NAD(+) + CoA = acetyl-CoA + NADH + H(+). The sequence is that of Acetaldehyde dehydrogenase 2 from Burkholderia vietnamiensis (strain G4 / LMG 22486) (Burkholderia cepacia (strain R1808)).